A 90-amino-acid chain; its full sequence is Auxin-responsive protein SAUR24 (90 aa).

This sequence belongs to the ARG7 family.

Its subcellular location is the cell membrane. Functionally, functions as a positive effector of cell expansion through modulation of auxin transport. In Arabidopsis thaliana (Mouse-ear cress), this protein is Auxin-responsive protein SAUR24.